A 418-amino-acid polypeptide reads, in one-letter code: Chromo domain-containing protein rhino (418 aa).

The Chromo domain maps to Tyr-24 to Glu-74. Composition is skewed to low complexity over residues Ala-84–Pro-99 and Ser-107–Gln-120. Disordered regions lie at residues Ala-84–Thr-167 and Pro-199–Arg-337. Basic residues predominate over residues Asn-131 to Gly-143. Residues Pro-152–Thr-167 show a composition bias toward polar residues. Residues Arg-218–Ala-228 show a composition bias toward basic and acidic residues. Positions Gly-258–Glu-275 are enriched in low complexity. Basic and acidic residues predominate over residues Lys-276–Pro-285. The tract at residues Thr-353–Lys-418 is required for interaction with del/deadlock.

In terms of assembly, homodimer in solution. Dimerization is essential for chromatin binding. Component of the Rhino-Deadlock-Cutoff (RDC) complex, composed of rhi/rhino, del/deadlock and cuff/cutoff. Interacts (via C-terminus) with del/deadlock (via N-terminus); this interaction is direct. Two copies of del/deadlock associate with each rhi/rhino dimer. Interacts with cuff/cutoff; this interaction is indirect and is mediated by del/deadlock. Interacts (via Chromo domain) with kipf/kipferl (via C2H2 type zinc finger 4). Interacts (via Chromo domain) with His3/histone H3 (via N-terminus di- or tri-methylated on 'Lys-10' (H3K9me2/3)); this interaction is direct. Two His3 N-terminal tails oriented anti-parallel to each other are required for dimer binding to His3. Female specific, expressed in both somatic and germline cells but highly enriched in ovaries. In the germarium of the developing oocyte expressed in germline stem cells, cystoblasts and developing germline cysts. Expressed in nurse cells in the germarium and egg chamber.

It localises to the nucleus. The protein resides in the chromosome. In terms of biological role, involved in piRNA (piwi-interacting RNA)-mediated transposon repression. May be involved in formation of the perinuclear nuage, a subcellular structure implicated in RNA processing that may be involved in transposon RNA surveillance and silencing. Required for ping-pong amplification during piRNA biogenesis, probably by promoting transcription of piRNA precursors. As part of the Rhino-Deadlock-Cutoff (RDC) Complex associates with, and drives non-canonical transcription of germline specific dual-strand piRNA clusters 80F, 38C and 42AB, but not single-stranded piRNA cluster 20A. Induction of piRNA expression is potentially achieved through a mechanism that prevents transcriptional termination and leads to readthrough from flanking transcription units. Recruited to specific chromatin regions by a combination of H3K9me2/3 histone methylation and differentially expressed sequence-specific recruitment factors. This association may involve direct interaction with DNA. Associates with chromatin upon exposure to homologous piRNA and facilitates transcriptional read-through. As part of the RDC complex, involved in suppression of splicing. In ovaries, recruitment to specific heterochromatin clusters is nucleated and stabilized by kipf/kipferl. During oogenesis, involved in axis specification and may regulate chromosome condensation at the onset of a mitotic-like phase that occurs during nurse cell chromosome duplication. Involved in the distribution of mRNAs for proteins that play a role in anterior-posterior and dorsal-ventral axes specification during development of the oocyte, including grk/gurken, osk/oskar and vas/vasa. Mitigates meiotic double strand breaks and interacts with DNA damage signaling to mediate axis specification. This Drosophila melanogaster (Fruit fly) protein is Chromo domain-containing protein rhino.